The sequence spans 611 residues: Zinc metalloproteinase-disintegrin-like ohanin (611 aa).

The first 20 residues, 1–20, serve as a signal peptide directing secretion; it reads MIQVLLVTICLVVFPYQGSS. Residues 21–187 constitute a propeptide that is removed on maturation; that stretch reads IILESGKVND…WESDEPIEKI (167 aa). The 196-residue stretch at 198-393 folds into the Peptidase M12B domain; that stretch reads KYLELYIVAD…DTPQCLINKP (196 aa). N217 and N260 each carry an N-linked (GlcNAc...) asparagine glycan. Cystine bridges form between C307-C388, C347-C372, and C349-C354. H332 contributes to the Zn(2+) binding site. The active site involves E333. Zn(2+)-binding residues include H336 and H342. N-linked (GlcNAc...) asparagine glycosylation is present at N395. Residues 401 to 487 enclose the Disintegrin domain; sequence NAVCGNYVEE…ECPMDRFHKN (87 aa). Cystine bridges form between C404/C433, C415/C428, C417/C423, C427/C450, C441/C447, C446/C472, C459/C479, C466/C498, C491/C503, C510/C560, C525/C578, C538/C548, C555/C603, and C597/C608. Residues 465 to 467 carry the D/ECD-tripeptide motif; that stretch reads ECD. N-linked (GlcNAc...) asparagine glycosylation occurs at N528.

Belongs to the venom metalloproteinase (M12B) family. P-III subfamily. P-IIIa sub-subfamily. As to quaternary structure, monomer. Zn(2+) is required as a cofactor. As to expression, expressed by the venom gland.

The protein resides in the secreted. With respect to regulation, inhibited by EDTA, but not by PMSF. Functionally, snake venom zinc metalloproteinase that has hemorrhagic activity. Inhibits ADP-, TMVA- and stejnulxin-induced platelet aggregation in a dose-dependent manner (on washed platelet, but not on platelet rich plasm). Also specifically degrades alpha-chain of fibrinogen (FGA). This Ophiophagus hannah (King cobra) protein is Zinc metalloproteinase-disintegrin-like ohanin.